The sequence spans 497 residues: Bifunctional protein GlmU (497 aa).

Residues 1–243 (MTSSTTSSTD…SALVAGVNDR (243 aa)) form a pyrophosphorylase region. Residues 16 to 19 (LAAG), K30, Q87, and 92 to 93 (GT) contribute to the UDP-N-acetyl-alpha-D-glucosamine site. D118 is a Mg(2+) binding site. 4 residues coordinate UDP-N-acetyl-alpha-D-glucosamine: G153, E168, N183, and N241. N241 serves as a coordination point for Mg(2+). The linker stretch occupies residues 244–264 (VQLAALGAELNRRIVTAHQRA). The interval 265-497 (GVTVIDPGST…LGHHDDSQGS (233 aa)) is N-acetyltransferase. The UDP-N-acetyl-alpha-D-glucosamine site is built by R346 and K364. H376 (proton acceptor) is an active-site residue. Y379 and N390 together coordinate UDP-N-acetyl-alpha-D-glucosamine. Acetyl-CoA is bound by residues A393, 399–400 (NY), S418, and A436. A disordered region spans residues 473 to 497 (ARAAERASGEAAEQALGHHDDSQGS). Basic and acidic residues predominate over residues 488 to 497 (LGHHDDSQGS).

It in the N-terminal section; belongs to the N-acetylglucosamine-1-phosphate uridyltransferase family. In the C-terminal section; belongs to the transferase hexapeptide repeat family. In terms of assembly, homotrimer. Mg(2+) is required as a cofactor.

It is found in the cytoplasm. It carries out the reaction alpha-D-glucosamine 1-phosphate + acetyl-CoA = N-acetyl-alpha-D-glucosamine 1-phosphate + CoA + H(+). It catalyses the reaction N-acetyl-alpha-D-glucosamine 1-phosphate + UTP + H(+) = UDP-N-acetyl-alpha-D-glucosamine + diphosphate. The protein operates within nucleotide-sugar biosynthesis; UDP-N-acetyl-alpha-D-glucosamine biosynthesis; N-acetyl-alpha-D-glucosamine 1-phosphate from alpha-D-glucosamine 6-phosphate (route II): step 2/2. It participates in nucleotide-sugar biosynthesis; UDP-N-acetyl-alpha-D-glucosamine biosynthesis; UDP-N-acetyl-alpha-D-glucosamine from N-acetyl-alpha-D-glucosamine 1-phosphate: step 1/1. It functions in the pathway bacterial outer membrane biogenesis; LPS lipid A biosynthesis. Functionally, catalyzes the last two sequential reactions in the de novo biosynthetic pathway for UDP-N-acetylglucosamine (UDP-GlcNAc). The C-terminal domain catalyzes the transfer of acetyl group from acetyl coenzyme A to glucosamine-1-phosphate (GlcN-1-P) to produce N-acetylglucosamine-1-phosphate (GlcNAc-1-P), which is converted into UDP-GlcNAc by the transfer of uridine 5-monophosphate (from uridine 5-triphosphate), a reaction catalyzed by the N-terminal domain. The protein is Bifunctional protein GlmU of Mycobacterium sp. (strain JLS).